The sequence spans 142 residues: Large ribosomal subunit protein mL43 (142 aa).

It belongs to the mitochondrion-specific ribosomal protein mL43 family. As to quaternary structure, component of the mitochondrial large ribosomal subunit. Mature mitochondrial ribosomes consist of a small (37S) and a large (54S) subunit. The 37S subunit contains at least 33 different proteins and 1 molecule of RNA (15S). The 54S subunit contains at least 45 different proteins and 1 molecule of RNA (21S).

It is found in the mitochondrion. This is Large ribosomal subunit protein mL43 (MRPL51) from Eremothecium gossypii (strain ATCC 10895 / CBS 109.51 / FGSC 9923 / NRRL Y-1056) (Yeast).